The primary structure comprises 92 residues: Small ribosomal subunit protein uS19c (92 aa).

It belongs to the universal ribosomal protein uS19 family.

It localises to the plastid. The protein localises to the chloroplast. Functionally, protein S19 forms a complex with S13 that binds strongly to the 16S ribosomal RNA. The sequence is that of Small ribosomal subunit protein uS19c from Illicium oligandrum (Star anise).